We begin with the raw amino-acid sequence, 230 residues long: uncharacterized protein (230 aa).

The helical transmembrane segment at 17 to 37 (AGALSLGIGFFALASALWFLI) threads the bilayer. Asparagine 126 carries N-linked (GlcNAc...) asparagine glycosylation.

It localises to the membrane. This is an uncharacterized protein from Mus musculus (Mouse).